We begin with the raw amino-acid sequence, 133 residues long: Holo-[acyl-carrier-protein] synthase (133 aa).

Residues aspartate 8 and glutamate 57 each contribute to the Mg(2+) site.

This sequence belongs to the P-Pant transferase superfamily. AcpS family. Requires Mg(2+) as cofactor.

The protein localises to the cytoplasm. It catalyses the reaction apo-[ACP] + CoA = holo-[ACP] + adenosine 3',5'-bisphosphate + H(+). In terms of biological role, transfers the 4'-phosphopantetheine moiety from coenzyme A to a Ser of acyl-carrier-protein. The polypeptide is Holo-[acyl-carrier-protein] synthase (Bartonella bacilliformis (strain ATCC 35685 / KC583 / Herrer 020/F12,63)).